The following is a 390-amino-acid chain: ATP-sensitive inward rectifier potassium channel 11 (390 aa).

Residues 1–65 (MLSRKGIIPE…LQDVFTTLVD (65 aa)) are Cytoplasmic-facing. 2 residues coordinate ATP: N48 and R50. A helical membrane pass occupies residues 66-92 (LKWPHTLLIFTMSFLCSWLLFAMAWWL). At 93-116 (IAFAHGDLAPSEGTAEPCVTSIHS) the chain is on the extracellular side. Cysteines 110 and 142 form a disulfide. The segment at residues 117–133 (FSSAFLFSIEVQVTIGF) is an intramembrane region (discontinuously helical; Pore-forming). 2 residues coordinate K(+): T130 and F133. A Selectivity filter motif is present at residues 130 to 135 (TIGFGG). Residues 134 to 142 (GGRMVTEEC) are Extracellular-facing. The chain crosses the membrane as a helical span at residues 143–171 (PLAILILIVQNIVGLMINAIMLGCIFMKT). Residues 172–390 (AQAHRRAETL…KFSISPDSLS (219 aa)) lie on the Cytoplasmic side of the membrane. An a 1,2-diacyl-sn-glycero-3-phospho-(1D-myo-inositol-4,5-bisphosphate)-binding site is contributed by R176. Position 330 (Y330) interacts with ATP. T341 carries the phosphothreonine; by MAPK1 modification. S385 carries the phosphoserine; by MAPK1 modification.

The protein belongs to the inward rectifier-type potassium channel (TC 1.A.2.1) family. KCNJ11 subfamily. In terms of assembly, homotetramer; the homotetramer binds four ATP molecules (one ATP per subunit). Forms an heterooctamer with ABCC8/SUR1; one KCNJ11 homotetramer interacts with four ABCC8/SUR1 molecules. Interacts with ABCC9/SUR2. Phosphorylation by MAPK1 results in changes in channel gating that destabilize the closed states and reduce the ATP sensitivity.

Its subcellular location is the membrane. The catalysed reaction is K(+)(in) = K(+)(out). With respect to regulation, KATP channels are regulated by cytoplasmic ATP/ADP ratios; ATP inhibits the channel by closing the pore, while ADP activates the channel. Activated by phosphatidylinositol 4,5-biphosphate (PtdIns(4,5)P2). Functionally, inward rectifier potassium channel that forms the pore of ATP-sensitive potassium channels (KATP), regulating potassium permeability as a function of cytoplasmic ATP and ADP concentrations in many different cells. Inward rectifier potassium channels are characterized by a greater tendency to allow potassium to flow into the cell rather than out of it. Their voltage dependence is regulated by the concentration of extracellular potassium; as external potassium is raised, the voltage range of the channel opening shifts to more positive voltages. The inward rectification is mainly due to the blockage of outward current by internal magnesium. Can be blocked by extracellular barium. In pancreatic cells, it forms KATP channels with ABCC8/SUR1. Can form cardiac and smooth muscle-type KATP channels with ABCC9. The sequence is that of ATP-sensitive inward rectifier potassium channel 11 (KCNJ11) from Homo sapiens (Human).